We begin with the raw amino-acid sequence, 915 residues long: Mitogen-activated protein kinase kinae kinase MST11 (915 aa).

Disordered stretches follow at residues 1-65, 134-171, and 183-249; these read MAML…PKHW, KKRN…NPSV, and GMAY…TRTD. Positions 26–45 are enriched in low complexity; that stretch reads AQASYPPSRRAPAVPPASQS. The 64-residue stretch at 65 to 128 folds into the SAM domain; that stretch reads WDEDKVCEYL…FLSIKKLRTK (64 aa). Composition is skewed to low complexity over residues 152–163 and 188–203; these read SESPSKPFHSSS and PSRP…PLPS. Residues 263–353 form the Ras-associating domain; sequence NQDVIRVIST…NRLILRRVPA (91 aa). The Protein kinase domain maps to 641 to 911; the sequence is WMKGALIGQG…ADDLMLSPFL (271 aa). ATP is bound by residues 647-655 and K670; that span reads IGQGSFGCV.

Belongs to the protein kinase superfamily. STE Ser/Thr protein kinase family. MAP kinase kinase kinase subfamily. As to quaternary structure, interacts with the adapter protein MST50.

It catalyses the reaction L-seryl-[protein] + ATP = O-phospho-L-seryl-[protein] + ADP + H(+). The catalysed reaction is L-threonyl-[protein] + ATP = O-phospho-L-threonyl-[protein] + ADP + H(+). In terms of biological role, mitogen-activated protein kinase kinase kinase; part of the MST11-MST7-PMK1 MAP kinase (MAPK) cascade that is essential for appressorium formation, penetration and invasive growth. The MST11-MST7-PMK1 MAP kinase cascade transduces signals from the cell surface sensors MDB2 and SHO1 that recognize various surface signals such as surface hydrophobicity, cutin monomers, and rice leaf waxes. MST11 acts as the upstream MAPKKK that directly phosphorylates MAPKK MST7. MST11 but not MST7 may also be involved in the OSM1 MAPK pathway in response to osmotic stresses. This Pyricularia oryzae (strain 70-15 / ATCC MYA-4617 / FGSC 8958) (Rice blast fungus) protein is Mitogen-activated protein kinase kinae kinase MST11.